Consider the following 343-residue polypeptide: Retroviral-like aspartic protease 1 (343 aa).

Over 1–55 the chain is Cytoplasmic; that stretch reads MGSPGASLGIKKALQSEQATALPASAPAVSQPTAPAPSCLPKAGQVIPTLLREAP. Positions 1–190 are excised as a propeptide; sequence MGSPGASLGI…HLPKEIVFAN (190 aa). The helical transmembrane segment at 56 to 76 threads the bilayer; the sequence is FSSVIAPTLLCGFLFLAWVAA. Residues 77-343 lie on the Extracellular side of the membrane; sequence EVPEESSRMA…SEEGRQELSH (267 aa). Residues 207–288 enclose the Peptidase A2 domain; that stretch reads VRFLVDSGAQ…AEEAIIGTDV (82 aa). Asp-212 is a catalytic residue. N-linked (GlcNAc...) asparagine glycosylation is present at Asn-276. Residues 327 to 343 constitute a propeptide that is removed on maturation; it reads LIEEDPSSEEGRQELSH.

Homodimer. In terms of processing, undergoes autocleavage which is necessary for activation of the protein. Expressed primarily in the granular layer of the epidermis and inner root sheath of hair follicles. In psoriatic skin, expressed throughout the stratum corneum. In ulcerated skin, expressed in the stratum granulosum of intact epidermis but almost absent from ulcerated regions. Expressed in differentiated areas of squamous cell carcinomas but not in undifferentiated tumors.

It localises to the membrane. In terms of biological role, protease responsible for filaggrin processing, essential for the maintenance of a proper epidermis organization. In Homo sapiens (Human), this protein is Retroviral-like aspartic protease 1.